The chain runs to 175 residues: ATP synthase subunit d, mitochondrial (175 aa).

Residue S2 is modified to N-acetylserine.

In terms of assembly, F-type ATP synthases have 2 components, the catalytic core F(1) and the membrane-embedded component F(0), linked together by a central stalk and a peripheral stalk. The central stalk, also called rotor shaft, is often seen as part of F(1). The peripheral stalk is seen as part of F(0). F(0) contains the membrane channel next to the rotor. F-type ATP synthases form dimers but each monomer functions independently in ATP generation. The dimer consists of 18 different polypeptides: ATP1 (subunit alpha, part of F(1), 3 molecules per monomer), ATP2 (subunit beta, part of F(1), 3 molecules per monomer), ATP3 (subunit gamma, part of the central stalk), ATP4 (subunit b, part of the peripheral stalk), ATP5/OSCP (subunit 5/OSCP, part of the peripheral stalk), ATP6 (subunit a, part of the peripheral stalk), ATP7 (subunit d, part of the peripheral stalk), ATP8 (subunit 8, part of the peripheral stalk), OLI1 (subunit c, part of the rotor, 10 molecules per monomer), ATP14 (subunit h, part of the peripheral stalk), ATP15 (subunit epsilon, part of the central stalk), ATP16 (subunit delta, part of the central stalk), ATP17 (subunit f, part of the peripheral stalk), ATP18 (subunit i/j, part of the peripheral stalk). Dimer-specific subunits are ATP19 (subunit k, at interface between monomers), ATP20 (subunit g, at interface between monomers), TIM11 (subunit e, at interface between monomers). Also contains subunit L.

It is found in the mitochondrion inner membrane. Mitochondrial membrane ATP synthase (F(1)F(0) ATP synthase or Complex V) produces ATP from ADP in the presence of a proton gradient across the membrane which is generated by electron transport complexes of the respiratory chain. F-type ATP synthases consist of two structural domains, F(1) - containing the extramembraneous catalytic core, and F(0) - containing the membrane proton channel, linked together by a central stalk and a peripheral stalk. During catalysis, ATP synthesis in the catalytic domain of F(1) is coupled via a rotary mechanism of the central stalk subunits to proton translocation. Part of the complex F(0) domain and the peripheral stalk, which acts as a stator to hold the catalytic alpha/ATP1(3)beta/ATP2(3) subcomplex and subunit a/ATP6 static relative to the rotary elements. The sequence is that of ATP synthase subunit d, mitochondrial from Pichia angusta (Yeast).